Reading from the N-terminus, the 388-residue chain is Chorismate synthase (388 aa).

NADP(+)-binding residues include Arg-39 and Arg-45. Residues 130–132 (RSS), 251–252 (NA), Gly-296, 311–315 (KPIPT), and Arg-337 each bind FMN.

This sequence belongs to the chorismate synthase family. In terms of assembly, homotetramer. The cofactor is FMNH2.

It carries out the reaction 5-O-(1-carboxyvinyl)-3-phosphoshikimate = chorismate + phosphate. Its pathway is metabolic intermediate biosynthesis; chorismate biosynthesis; chorismate from D-erythrose 4-phosphate and phosphoenolpyruvate: step 7/7. In terms of biological role, catalyzes the anti-1,4-elimination of the C-3 phosphate and the C-6 proR hydrogen from 5-enolpyruvylshikimate-3-phosphate (EPSP) to yield chorismate, which is the branch point compound that serves as the starting substrate for the three terminal pathways of aromatic amino acid biosynthesis. This reaction introduces a second double bond into the aromatic ring system. The protein is Chorismate synthase of Streptococcus pneumoniae (strain 70585).